A 279-amino-acid chain; its full sequence is Fructose-1,6-bisphosphatase class 1 (279 aa).

Mg(2+) contacts are provided by glutamate 65, aspartate 85, leucine 87, and aspartate 88. Substrate is bound by residues 88 to 91, tyrosine 190, and lysine 221; that span reads DGSS. Residue glutamate 227 coordinates Mg(2+).

Belongs to the FBPase class 1 family. In terms of assembly, homotetramer. Requires Mg(2+) as cofactor.

It is found in the cytoplasm. The catalysed reaction is beta-D-fructose 1,6-bisphosphate + H2O = beta-D-fructose 6-phosphate + phosphate. Its pathway is carbohydrate biosynthesis; gluconeogenesis. This chain is Fructose-1,6-bisphosphatase class 1, found in Helicobacter hepaticus (strain ATCC 51449 / 3B1).